A 392-amino-acid chain; its full sequence is Cobalt-precorrin-5B C(1)-methyltransferase (392 aa).

It belongs to the CbiD family.

It catalyses the reaction Co-precorrin-5B + S-adenosyl-L-methionine = Co-precorrin-6A + S-adenosyl-L-homocysteine. It functions in the pathway cofactor biosynthesis; adenosylcobalamin biosynthesis; cob(II)yrinate a,c-diamide from sirohydrochlorin (anaerobic route): step 6/10. In terms of biological role, catalyzes the methylation of C-1 in cobalt-precorrin-5B to form cobalt-precorrin-6A. The chain is Cobalt-precorrin-5B C(1)-methyltransferase from Pelobacter propionicus (strain DSM 2379 / NBRC 103807 / OttBd1).